A 221-amino-acid polypeptide reads, in one-letter code: Inositol phosphorylceramide synthase regulatory subunit KEI1 (221 aa).

The next 4 helical transmembrane spans lie at 11 to 31 (SFLG…ISIL), 54 to 74 (WIAY…LYLI), 79 to 99 (LLVF…TCFF), and 154 to 174 (ILIT…LASF). The COPI vesicle-binding stretch occupies residues 176 to 221 (QELLHHPKYLVDRDDVEQNLKNKPIWKRLWAKSQKGCYKLCKNLLE).

This sequence belongs to the KEI1 family. In terms of assembly, component of the inositol phosphorylceramide synthase complex composed of at least AUR1 and KEI1. Interacts (via C-terminal region) with COP1 and SEC21. Note=The interaction with AUR1 seems to occur with the full-length protein before cleavage by KEX2 since both full-length and short chains of KEI1 interact with AUR1. The precursor protein is cleaved into two polypeptide chains, KEI1N and KEI1C. The cleavage is performed in the Golgi apparatus by the KEX2 protease which recognizes residue Arg-135. Generation of KEX2 cleavage site may have been an accidental event in evolution without specific advantages or disadvantages in IPC synthesis.

The protein localises to the golgi apparatus membrane. Regulatory component of the inositol phosphorylceramide (ICP) synthase which catalyzes the addition of a phosphorylinositol group onto ceramide to form inositol phosphorylceramide, an essential step in sphingolipid biosynthesis. Helps the medial Golgi localization of IPC synthase in a COPI vesicle-dependent manner. The chain is Inositol phosphorylceramide synthase regulatory subunit KEI1 (KEI1) from Saccharomyces cerevisiae (strain ATCC 204508 / S288c) (Baker's yeast).